Here is a 68-residue protein sequence, read N- to C-terminus: Protein SlyX homolog (68 aa).

It belongs to the SlyX family.

In Pseudomonas entomophila (strain L48), this protein is Protein SlyX homolog.